A 156-amino-acid chain; its full sequence is Probable cyclic pyranopterin monophosphate synthase (156 aa).

A substrate-binding site is contributed by 109-110; the sequence is MD. D124 is an active-site residue.

Belongs to the MoaC family. In terms of assembly, homohexamer; trimer of dimers.

The enzyme catalyses (8S)-3',8-cyclo-7,8-dihydroguanosine 5'-triphosphate = cyclic pyranopterin phosphate + diphosphate. It functions in the pathway cofactor biosynthesis; molybdopterin biosynthesis. Its function is as follows. Catalyzes the conversion of (8S)-3',8-cyclo-7,8-dihydroguanosine 5'-triphosphate to cyclic pyranopterin monophosphate (cPMP). The polypeptide is Probable cyclic pyranopterin monophosphate synthase (Methanopyrus kandleri (strain AV19 / DSM 6324 / JCM 9639 / NBRC 100938)).